Here is a 254-residue protein sequence, read N- to C-terminus: uncharacterized protein (254 aa).

8 consecutive transmembrane segments (helical) span residues 41 to 61 (VFVF…IKII), 64 to 84 (IFQA…EYFF), 91 to 111 (IYCG…LYIL), 125 to 145 (ILIG…FVLA), 146 to 166 (PAAL…LWSF), 172 to 192 (FILL…IQLL), 204 to 224 (MLLA…VLTP), and 232 to 252 (IIMS…LFLL).

This sequence belongs to the TatC family.

The protein localises to the plastid. It localises to the chloroplast membrane. This is an uncharacterized protein from Porphyra purpurea (Red seaweed).